The following is a 450-amino-acid chain: Tol-Pal system protein TolB (450 aa).

The signal sequence occupies residues 1 to 47; sequence MRKLWAPNWLSAKRHHANQAATRLIGRHALMAWLAAALALSAGAAQA.

Belongs to the TolB family. The Tol-Pal system is composed of five core proteins: the inner membrane proteins TolA, TolQ and TolR, the periplasmic protein TolB and the outer membrane protein Pal. They form a network linking the inner and outer membranes and the peptidoglycan layer.

It is found in the periplasm. In terms of biological role, part of the Tol-Pal system, which plays a role in outer membrane invagination during cell division and is important for maintaining outer membrane integrity. In Cupriavidus pinatubonensis (strain JMP 134 / LMG 1197) (Cupriavidus necator (strain JMP 134)), this protein is Tol-Pal system protein TolB.